The chain runs to 133 residues: MKLLYCLLLVILALVGLSSGAKPSDKLQIGVKYRPDECTVKTKSGDKLKIHYTGTLLNGDKFDSSVDRGTPFEFKIGVGQVIKGWDQGVLGMCVGEKRKLIIPPSLGYGQQGAGDKIPGNSHLIFDVELIGIN.

Residues 1-20 (MKLLYCLLLVILALVGLSSG) form the signal peptide. One can recognise a PPIase FKBP-type domain in the interval 45–133 (GDKLKIHYTG…IFDVELIGIN (89 aa)).

The protein belongs to the FKBP-type PPIase family.

The enzyme catalyses [protein]-peptidylproline (omega=180) = [protein]-peptidylproline (omega=0). Inhibited by both FK506 and rapamycin. In terms of biological role, PPIases accelerate the folding of proteins by catalyzing the cis-trans isomerization of proline imidic peptide bonds in oligopeptides. This Dictyostelium discoideum (Social amoeba) protein is FK506-binding protein 2 (fkbp2).